We begin with the raw amino-acid sequence, 446 residues long: Tubulin alpha-1B chain (446 aa).

Residue Q11 coordinates GTP. The segment at 34–55 (GRLMDDSPSKHDSGSTFFSETG) is disordered. A compositionally biased stretch (basic and acidic residues) spans 35 to 46 (RLMDDSPSKHDS). The GTP site is built by E69, S138, G142, T143, S177, N204, and N226. Position 69 (E69) interacts with Mg(2+). E252 is an active-site residue.

It belongs to the tubulin family. As to quaternary structure, dimer of alpha and beta chains. A typical microtubule is a hollow water-filled tube with an outer diameter of 25 nm and an inner diameter of 15 nM. Alpha-beta heterodimers associate head-to-tail to form protofilaments running lengthwise along the microtubule wall with the beta-tubulin subunit facing the microtubule plus end conferring a structural polarity. Microtubules usually have 13 protofilaments but different protofilament numbers can be found in some organisms and specialized cells. Mg(2+) is required as a cofactor.

The protein resides in the cytoplasm. Its subcellular location is the cytoskeleton. The catalysed reaction is GTP + H2O = GDP + phosphate + H(+). Tubulin is the major constituent of microtubules, a cylinder consisting of laterally associated linear protofilaments composed of alpha- and beta-tubulin heterodimers. Microtubules grow by the addition of GTP-tubulin dimers to the microtubule end, where a stabilizing cap forms. Below the cap, tubulin dimers are in GDP-bound state, owing to GTPase activity of alpha-tubulin. This is Tubulin alpha-1B chain (TUB-1B) from Schizophyllum commune (Split gill fungus).